The primary structure comprises 135 residues: Peptidyl-prolyl cis-trans isomerase FPR2 (135 aa).

An N-terminal signal peptide occupies residues 1 to 17 (MMFNIYLFVTFFSTILA). Positions 43 to 132 (GDKVKVHYTG…VFDVELVDVK (90 aa)) constitute a PPIase FKBP-type domain.

This sequence belongs to the FKBP-type PPIase family. FKBP2 subfamily.

The protein localises to the endoplasmic reticulum membrane. The catalysed reaction is [protein]-peptidylproline (omega=180) = [protein]-peptidylproline (omega=0). With respect to regulation, inhibited by both FK506 and rapamycin. Binds FK506 with 15-fold lower affinity than FKB1. Functionally, PPIases accelerate the folding of proteins. It catalyzes the cis-trans isomerization of proline imidic peptide bonds in oligopeptides. FKBP-13 may play a role in protein trafficking in the ER. The protein is Peptidyl-prolyl cis-trans isomerase FPR2 (FPR2) of Saccharomyces cerevisiae (strain ATCC 204508 / S288c) (Baker's yeast).